Here is a 326-residue protein sequence, read N- to C-terminus: (+)-T-muurolol synthase ((2E,6E)-farnesyl diphosphate cyclizing) (326 aa).

Aspartate 81 and aspartate 85 together coordinate Mg(2+). The short motif at 81–85 (DDQCD) is the DDXXD motif element. Arginine 175 provides a ligand contact to substrate. Residues asparagine 221 and serine 225 each contribute to the Mg(2+) site. Lysine 228 lines the substrate pocket. Mg(2+) is bound at residue glutamate 229. Residue 309-310 (RY) participates in substrate binding.

The protein belongs to the terpene synthase family. Mg(2+) serves as cofactor.

The enzyme catalyses (2E,6E)-farnesyl diphosphate + H2O = (+)-T-muurolol + diphosphate. It participates in secondary metabolite biosynthesis; terpenoid biosynthesis. Functionally, catalyzes the conversion of (2E,6E)-farnesyl diphosphate (FPP) into (+)-T-muurolol via a 1,10-cyclization, which requires isomerization of FPP to nerolidyl diphosphate (NPP) and then abstraction of the pyrophosphate from intermediate NPP leading to a (E,Z)-germacradienyl (helminthogermacradienyl) cation. The polypeptide is (+)-T-muurolol synthase ((2E,6E)-farnesyl diphosphate cyclizing) (Roseiflexus castenholzii (strain DSM 13941 / HLO8)).